The sequence spans 326 residues: Malate dehydrogenase (326 aa).

An NAD(+)-binding site is contributed by 11–17; sequence GAAGQIG. Residues Arg-92 and Arg-98 each coordinate substrate. Residues Asn-105, Gln-112, and 129-131 contribute to the NAD(+) site; that span reads VGN. The substrate site is built by Asn-131 and Arg-162. The Proton acceptor role is filled by His-187.

It belongs to the LDH/MDH superfamily. MDH type 2 family.

It carries out the reaction (S)-malate + NAD(+) = oxaloacetate + NADH + H(+). In terms of biological role, catalyzes the reversible oxidation of malate to oxaloacetate. The protein is Malate dehydrogenase of Leptospira borgpetersenii serovar Hardjo-bovis (strain JB197).